Reading from the N-terminus, the 287-residue chain is Probable endoribonuclease YicC (287 aa).

Belongs to the YicC/YloC family. The cofactor is a divalent metal cation.

Probably a ssRNA endonuclease. In terms of biological role, might contribute to small RNA (sRNA) regulation. The polypeptide is Probable endoribonuclease YicC (Salmonella typhimurium (strain LT2 / SGSC1412 / ATCC 700720)).